A 530-amino-acid chain; its full sequence is DEK domain-containing chromatin-associated protein 2 (530 aa).

2 stretches are compositionally biased toward basic and acidic residues: residues 1-47 and 57-68; these read MATE…AEEE and AKEGELGEKDKE. The disordered stretch occupies residues 1-130; the sequence is MATETLDEKT…PSKSVSIEKG (130 aa). A coiled-coil region spans residues 41-61; that stretch reads IGEAEEEKKEDEEEGEAKEGE. A compositionally biased stretch (acidic residues) spans 69-82; the sequence is DDVESEEEEEEEEG. 2 stretches are compositionally biased toward basic and acidic residues: residues 83 to 93 and 100 to 110; these read SGSKKSSEKET and RPTRERKKVER. Positions 185–205 form a coiled coil; the sequence is EKEEEKQRARIKEKIDKCVKE. A disordered region spans residues 246–430; it reads IIADQEKAKK…GKAKAEPTRK (185 aa). Residues 253–263 show a composition bias toward basic residues; the sequence is AKKRKSTPKRG. Positions 260-267 match the Nuclear localization signal 1 motif; it reads PKRGKSGE. The span at 286 to 332 shows a compositional bias: acidic residues; sequence SDTEEGKDEGDADSEGTNDPHEEDDAAPEEESDHEKTDTDDEKDEVE. 2 short sequence motifs (nuclear localization signal) span residues 343 to 350 and 384 to 391; these read SKKTVEES and AKKQKVDH. Positions 374–384 are enriched in polar residues; that stretch reads KQIAKSTSSPA. The span at 387-397 shows a compositional bias: basic and acidic residues; it reads QKVDHVESSKE. A DEK-C domain is found at 426 to 481; the sequence is EPTRKEMLEVVSKILKEVDFNTATLSDILQKLSDHFGVELSHRKPEVKDVITEAIN. DNA-binding regions lie at residues 444–458 and 473–477; these read DFNT…QKLS and KDVIT. The interval 482–530 is disordered; sequence AMTDDEEEDEEEEAEAGSDKEKEEVKGEEEEEKAEAESDKEKEKEEPKD. Residues 484–497 are compositionally biased toward acidic residues; that stretch reads TDDEEEDEEEEAEA. Residues 492 to 527 adopt a coiled-coil conformation; it reads EEEAEAGSDKEKEEVKGEEEEEKAEAESDKEKEKEE. A compositionally biased stretch (basic and acidic residues) spans 516 to 530; the sequence is EAESDKEKEKEEPKD.

Found in a mRNA splicing-dependent exon junction complex (EJC). Binds specifically histones H3 and H4.

Its subcellular location is the nucleus. The protein localises to the nucleolus. Functionally, chromatin-associated protein which contributes to the modulation of chromatin structure (such as super-helical structure of DNA) and function. Binds to chromatin of protein-coding genes throughout the genome to regulate nucleosome occupancy and chromatin accessibility, and to modulate the expression of target genes. The protein is DEK domain-containing chromatin-associated protein 2 of Arabidopsis thaliana (Mouse-ear cress).